The sequence spans 884 residues: Alanine--tRNA ligase (884 aa).

Zn(2+) is bound by residues His570, His574, Cys676, and His680.

Belongs to the class-II aminoacyl-tRNA synthetase family. Zn(2+) is required as a cofactor.

The protein localises to the cytoplasm. The catalysed reaction is tRNA(Ala) + L-alanine + ATP = L-alanyl-tRNA(Ala) + AMP + diphosphate. In terms of biological role, catalyzes the attachment of alanine to tRNA(Ala) in a two-step reaction: alanine is first activated by ATP to form Ala-AMP and then transferred to the acceptor end of tRNA(Ala). Also edits incorrectly charged Ser-tRNA(Ala) and Gly-tRNA(Ala) via its editing domain. This is Alanine--tRNA ligase from Lawsonia intracellularis (strain PHE/MN1-00).